The primary structure comprises 275 residues: NH(3)-dependent NAD(+) synthetase (275 aa).

50–57 (GISGGVDS) lines the ATP pocket. Asp-56 contacts Mg(2+). Arg-147 is a deamido-NAD(+) binding site. Position 167 (Thr-167) interacts with ATP. Glu-172 serves as a coordination point for Mg(2+). Residues Lys-180 and Asp-187 each coordinate deamido-NAD(+). ATP-binding residues include Lys-196 and Thr-218. Residue 267 to 268 (HK) participates in deamido-NAD(+) binding.

It belongs to the NAD synthetase family. In terms of assembly, homodimer.

It carries out the reaction deamido-NAD(+) + NH4(+) + ATP = AMP + diphosphate + NAD(+) + H(+). It participates in cofactor biosynthesis; NAD(+) biosynthesis; NAD(+) from deamido-NAD(+) (ammonia route): step 1/1. Its function is as follows. Catalyzes the ATP-dependent amidation of deamido-NAD to form NAD. Uses ammonia as a nitrogen source. This chain is NH(3)-dependent NAD(+) synthetase, found in Stutzerimonas stutzeri (strain A1501) (Pseudomonas stutzeri).